Reading from the N-terminus, the 194-residue chain is dCTP deaminase (194 aa).

DCTP contacts are provided by residues 110-115, aspartate 128, 136-138, tyrosine 171, lysine 178, and glutamine 182; these read RSSLAR and VLE. The active-site Proton donor/acceptor is the glutamate 138.

It belongs to the dCTP deaminase family. In terms of assembly, homotrimer.

It catalyses the reaction dCTP + H2O + H(+) = dUTP + NH4(+). Its pathway is pyrimidine metabolism; dUMP biosynthesis; dUMP from dCTP (dUTP route): step 1/2. In terms of biological role, catalyzes the deamination of dCTP to dUTP. This Pasteurella multocida (strain Pm70) protein is dCTP deaminase.